Reading from the N-terminus, the 202-residue chain is MKLERKFYDRPTLEVSKDLLGKKLVHYVKGEKLSARIVEVEAYIGAIDKAAHSYNNKITERTKIMFGPPGYAYVYLIYGMYHCMNIVTEKDGVAAAVLIRAVEPVNGIETMANYRYSKPIEDLTKKQIHNLTSGPGKLCVAMNISKINNGADLCGEEMWIEADGYHNFEIVTTKRINIDYAEEAIDFPWRFYIKDNPFISRK.

Belongs to the DNA glycosylase MPG family.

This chain is Putative 3-methyladenine DNA glycosylase, found in Alkaliphilus oremlandii (strain OhILAs) (Clostridium oremlandii (strain OhILAs)).